Consider the following 246-residue polypeptide: MKKPPVPLLQNGLRADGRAPDQMREVQIQVGTVSNADGSAVVSYGATTAVAAVYGPREMHPRHLSLPDRGVMRVRYHMAPFSTKDERKSPTPSRREIEISKVLREALEPAVMLEQYPRSRIDVFIEILQADGSTRVASLTAASLALADAGIYMRDLVVGVSVGLVDGTVVLDLNGLEDNYGEGDMPVGYMPNLRRFTLLQLDGAWTREKFLEALGLAVKGAEYVYQVAREALKNKYMAIAEEIYGR.

It belongs to the RNase PH family. Rrp41 subfamily. Component of the archaeal exosome complex. Forms a hexameric ring-like arrangement composed of 3 Rrp41-Rrp42 heterodimers. The hexameric ring associates with a trimer of Rrp4 and/or Csl4 subunits.

It localises to the cytoplasm. Functionally, catalytic component of the exosome, which is a complex involved in RNA degradation. Has 3'-&gt;5' exoribonuclease activity. Can also synthesize heteromeric RNA-tails. The sequence is that of Exosome complex component Rrp41 from Pyrobaculum calidifontis (strain DSM 21063 / JCM 11548 / VA1).